Reading from the N-terminus, the 350-residue chain is NADH-cytochrome b5 reductase 2 (350 aa).

The helical transmembrane segment at 43-63 (PLVLALGGVAGIGAWYGLGGF) threads the bilayer. Residues 96–204 (DQFVEFTLKE…KGPIAKFAYK (109 aa)) form the FAD-binding FR-type domain. Position 207–242 (207–242 (EFESIGMIAGGSGITPMYQVIQDIASNPSDKTKVTL)) interacts with FAD.

It belongs to the flavoprotein pyridine nucleotide cytochrome reductase family. It depends on FAD as a cofactor.

It is found in the mitochondrion outer membrane. The catalysed reaction is 2 Fe(III)-[cytochrome b5] + NADH = 2 Fe(II)-[cytochrome b5] + NAD(+) + H(+). Its function is as follows. May mediate the reduction of outer membrane cytochrome b5. The chain is NADH-cytochrome b5 reductase 2 (MCR1) from Mycosarcoma maydis (Corn smut fungus).